Consider the following 531-residue polypeptide: O-phosphoserine--tRNA(Cys) ligase (531 aa).

Substrate-binding positions include 189-191 (HMT), 234-236 (SAS), 276-277 (YY), and Asn-319.

This sequence belongs to the class-II aminoacyl-tRNA synthetase family. O-phosphoseryl-tRNA(Cys) synthetase subfamily. In terms of assembly, homotetramer. Interacts with SepCysS.

The catalysed reaction is tRNA(Cys) + O-phospho-L-serine + ATP = O-phospho-L-seryl-tRNA(Cys) + AMP + diphosphate. In terms of biological role, catalyzes the attachment of O-phosphoserine (Sep) to tRNA(Cys). This Methanoculleus marisnigri (strain ATCC 35101 / DSM 1498 / JR1) protein is O-phosphoserine--tRNA(Cys) ligase.